The following is a 169-amino-acid chain: Major pepsin inhibitor 3 (169 aa).

The signal sequence occupies residues 1-20; that stretch reads MHVWLILSLASLWTSSIAYS. Pyrrolidone carboxylic acid is present on Gln21. 3 disulfides stabilise this stretch: Cys33/Cys79, Cys68/Cys86, and Cys99/Cys166. Residues 135–169 form a disordered region; sequence EEQQENQPPSSGMPHGAVPAGGLSPPPPPSFCTVQ. Positions 158-169 are enriched in pro residues; that stretch reads SPPPPPSFCTVQ.

The protein belongs to the protease inhibitor I33 family. Body wall.

The protein localises to the secreted. Functionally, this is an inhibitor of the aspartic protease pepsin. In Ascaris suum (Pig roundworm), this protein is Major pepsin inhibitor 3.